We begin with the raw amino-acid sequence, 87 residues long: Insulin-related peptide 1 (87 aa).

The first 19 residues, 1 to 19 (MKSFMVFVLIFACFSCYYA), serve as a signal peptide directing secretion. Positions 20–44 (QESTNFYCGRTLSRALAVLCYGAES) are excised as a propeptide. Arg-64 carries the post-translational modification Arginine amide. A propeptide spanning residues 68–87 (GPVDECCEKACSIQELMTYC) is cleaved from the precursor.

The protein belongs to the insulin family. In terms of tissue distribution, DAGWWIPQHGHHALAGVR-amide: Expressed in corpora cardiaca (CC), corpora allata (CA), antennal lobe (AL) and gnathal ganglion (GNG) (at protein level). Expression in CC and CA detected in most animals, in AL and GNG in few animals (at protein level).

The protein localises to the secreted. This Agrotis ipsilon (Black cutworm moth) protein is Insulin-related peptide 1.